A 140-amino-acid chain; its full sequence is uncharacterized protein (140 aa).

N-linked (GlcNAc...) asparagine glycosylation is present at asparagine 27. 3 consecutive transmembrane segments (helical) span residues 45-65, 76-96, and 116-136; these read FSLYWTLIFNGAFYVTAGVYA, VWIFVMYVLYGGVQGLTTGTV, and VPLCCAVVQILFDVVLSYSMV.

It belongs to the TMEM170 family.

The protein resides in the membrane. This is an uncharacterized protein from Saccharomyces cerevisiae (strain ATCC 204508 / S288c) (Baker's yeast).